Here is a 142-residue protein sequence, read N- to C-terminus: VapC ribonuclease R02377 (142 aa).

One can recognise a PINc domain in the interval 3-140 (FVDGSVIVAI…YKGNDFSQTD (138 aa)). 2 residues coordinate Mg(2+): Asp-5 and Asp-115.

This sequence belongs to the PINc/VapC protein family. It depends on Mg(2+) as a cofactor.

Its function is as follows. Toxic component of a type II toxin-antitoxin (TA) system. An RNase. The protein is VapC ribonuclease R02377 of Rhizobium meliloti (strain 1021) (Ensifer meliloti).